A 473-amino-acid chain; its full sequence is Photosystem II CP43 reaction center protein (473 aa).

Residues 1 to 14 constitute a propeptide that is removed on maturation; the sequence is MKTLYSLRRFYPVE. Threonine 15 is subject to N-acetylthreonine. The residue at position 15 (threonine 15) is a Phosphothreonine. A run of 5 helical transmembrane segments spans residues 69–93, 134–155, 178–200, 255–275, and 291–312; these read LFEV…PHLA, LLGP…KDRN, KALY…RKIT, KPFA…LSYS, and WFNN…ASQA. [CaMn4O5] cluster is bound at residue glutamate 367. A helical membrane pass occupies residues 447–471; that stretch reads RARAAAAGFEKGIDRDFEPALSMTP.

It belongs to the PsbB/PsbC family. PsbC subfamily. PSII is composed of 1 copy each of membrane proteins PsbA, PsbB, PsbC, PsbD, PsbE, PsbF, PsbH, PsbI, PsbJ, PsbK, PsbL, PsbM, PsbT, PsbX, PsbY, PsbZ, Psb30/Ycf12, at least 3 peripheral proteins of the oxygen-evolving complex and a large number of cofactors. It forms dimeric complexes. It depends on Binds multiple chlorophylls and provides some of the ligands for the Ca-4Mn-5O cluster of the oxygen-evolving complex. It may also provide a ligand for a Cl- that is required for oxygen evolution. PSII binds additional chlorophylls, carotenoids and specific lipids. as a cofactor.

The protein resides in the plastid. It is found in the chloroplast thylakoid membrane. Functionally, one of the components of the core complex of photosystem II (PSII). It binds chlorophyll and helps catalyze the primary light-induced photochemical processes of PSII. PSII is a light-driven water:plastoquinone oxidoreductase, using light energy to abstract electrons from H(2)O, generating O(2) and a proton gradient subsequently used for ATP formation. This chain is Photosystem II CP43 reaction center protein, found in Oenothera argillicola (Appalachian evening primrose).